The chain runs to 387 residues: Methylthioribose-1-phosphate isomerase (387 aa).

Residue Asp257 is the Proton donor of the active site.

The protein belongs to the eIF-2B alpha/beta/delta subunits family. MtnA subfamily.

The protein resides in the cytoplasm. It localises to the nucleus. The enzyme catalyses 5-(methylsulfanyl)-alpha-D-ribose 1-phosphate = 5-(methylsulfanyl)-D-ribulose 1-phosphate. Its pathway is amino-acid biosynthesis; L-methionine biosynthesis via salvage pathway; L-methionine from S-methyl-5-thio-alpha-D-ribose 1-phosphate: step 1/6. Catalyzes the interconversion of methylthioribose-1-phosphate (MTR-1-P) into methylthioribulose-1-phosphate (MTRu-1-P). The sequence is that of Methylthioribose-1-phosphate isomerase (mri1) from Aspergillus fumigatus (strain CBS 144.89 / FGSC A1163 / CEA10) (Neosartorya fumigata).